Reading from the N-terminus, the 512-residue chain is Lysine--tRNA ligase (512 aa).

The Mg(2+) site is built by glutamate 421 and glutamate 428.

Belongs to the class-II aminoacyl-tRNA synthetase family. Homodimer. The cofactor is Mg(2+).

The protein localises to the cytoplasm. The catalysed reaction is tRNA(Lys) + L-lysine + ATP = L-lysyl-tRNA(Lys) + AMP + diphosphate. The chain is Lysine--tRNA ligase from Aeromonas salmonicida (strain A449).